Consider the following 360-residue polypeptide: Ethanolamine-phosphate cytidylyltransferase (360 aa).

CTP-binding positions include 207-208, 215-218, Lys-243, 291-294, and 321-325; these read GF, HTEA, HGDD, and HTEGL.

Belongs to the cytidylyltransferase family.

It carries out the reaction phosphoethanolamine + CTP + H(+) = CDP-ethanolamine + diphosphate. It participates in phospholipid metabolism; phosphatidylethanolamine biosynthesis; phosphatidylethanolamine from ethanolamine: step 2/3. Its function is as follows. Ethanolamine-phosphate cytidylyltransferase that catalyzes the second step in the synthesis of phosphatidylethanolamine (PE) from ethanolamine via the CDP-ethanolamine pathway. The sequence is that of Ethanolamine-phosphate cytidylyltransferase (pctA) from Dictyostelium discoideum (Social amoeba).